A 175-amino-acid polypeptide reads, in one-letter code: MAVRIRLSKRGRRKLALYDIVVSDSRSPRDGKFIQKLGTYNPNTNPATVVLNDELTFDWVMKGALPTDTARTILSERGVMLKKHLQVGVDKGAITQEVADQKFSAWVSNKEASKTSNANALVSKKEADRKARLAAEVKIKEAKAEQVRAKKIVAENPVAAADLAEATDAPAEAAE.

It belongs to the bacterial ribosomal protein bS16 family.

The polypeptide is Small ribosomal subunit protein bS16 (Cytophaga hutchinsonii (strain ATCC 33406 / DSM 1761 / CIP 103989 / NBRC 15051 / NCIMB 9469 / D465)).